A 427-amino-acid chain; its full sequence is UPF0761 membrane protein Cphamn1_1013 (427 aa).

A run of 6 helical transmembrane segments spans residues 51–71 (LLSL…SPVF), 107–127 (TVPT…ISTI), 147–167 (FTLY…GLVA), 188–208 (ILSY…YMLV), 218–238 (AVSG…WFSF), and 251–271 (GALS…VVAL).

It belongs to the UPF0761 family.

The protein localises to the cell inner membrane. This chain is UPF0761 membrane protein Cphamn1_1013, found in Chlorobium phaeobacteroides (strain BS1).